A 939-amino-acid chain; its full sequence is U3 small nucleolar RNA-associated protein 21 (939 aa).

S2 bears the N-acetylserine mark. 14 WD repeats span residues 40–71, 81–111, 119–158, 168–201, 208–245, 252–287, 295–347, 354–388, 415–454, 463–497, 505–541, 546–581, 583–624, and 626–664; these read ATGT…LLFV, VALS…HLLE, EHLC…TKLT, VSLQ…LVFT, QITT…RTIK, SSLS…IHVL, YGGV…RSRG, SYIA…QSQE, VALA…GRWT, VKSV…LRKK, VTGI…GKLK, ITAM…VRQL, GHSN…DGII, and DNVA…KTVS. The residue at position 772 (S772) is a Phosphoserine.

As to quaternary structure, interacts with snoRNA U3. Interacts with MPP10. Interacts (via WD repeats) with UTP18. Component of the ribosomal small subunit (SSU) processome composed of at least 40 protein subunits and snoRNA U3.

Its subcellular location is the nucleus. It localises to the nucleolus. Involved in nucleolar processing of pre-18S ribosomal RNA and ribosome assembly. This is U3 small nucleolar RNA-associated protein 21 (UTP21) from Saccharomyces cerevisiae (strain ATCC 204508 / S288c) (Baker's yeast).